Here is a 263-residue protein sequence, read N- to C-terminus: Thiazole synthase (263 aa).

The Schiff-base intermediate with DXP role is filled by lysine 102. Residues glycine 164, 190-191 (AG), and 212-213 (NT) contribute to the 1-deoxy-D-xylulose 5-phosphate site.

This sequence belongs to the ThiG family. As to quaternary structure, homotetramer. Forms heterodimers with either ThiH or ThiS.

The protein localises to the cytoplasm. The enzyme catalyses [ThiS sulfur-carrier protein]-C-terminal-Gly-aminoethanethioate + 2-iminoacetate + 1-deoxy-D-xylulose 5-phosphate = [ThiS sulfur-carrier protein]-C-terminal Gly-Gly + 2-[(2R,5Z)-2-carboxy-4-methylthiazol-5(2H)-ylidene]ethyl phosphate + 2 H2O + H(+). It participates in cofactor biosynthesis; thiamine diphosphate biosynthesis. Its function is as follows. Catalyzes the rearrangement of 1-deoxy-D-xylulose 5-phosphate (DXP) to produce the thiazole phosphate moiety of thiamine. Sulfur is provided by the thiocarboxylate moiety of the carrier protein ThiS. In vitro, sulfur can be provided by H(2)S. In Helicobacter hepaticus (strain ATCC 51449 / 3B1), this protein is Thiazole synthase.